A 206-amino-acid chain; its full sequence is mRNA-decapping protein D9 (206 aa).

The Nudix hydrolase domain occupies 23 to 206 (KKTHVFAICV…FIYNTLLYSK (184 aa)). The short motif at 104–125 (GKLNKSETIDDCIRREIKEETD) is the Nudix box element. E110 contributes to the Mg(2+) binding site. The active-site Nucleophile is the E119. Positions 123 and 144 each coordinate Mg(2+).

The protein belongs to the Nudix hydrolase family. The cofactor is Mg(2+). Requires Mn(2+) as cofactor.

Functionally, decapping enzyme required for the removal of the 5'-end m7GpppN cap tethered to viral and host mRNAs to allow their decay in cells. May therefore accelerate viral and cellular mRNA turnover to eliminate competing host mRNAs and allow stage-specific synthesis of viral proteins. Acceleration of the turnover of cellular transcripts may even promote the shutoff of host protein synthesis. Does not cleave unmethylated RNAs or RNAs shorter than 24 nucleotides. The sequence is that of mRNA-decapping protein D9 from Oryctolagus cuniculus (Rabbit).